The sequence spans 154 residues: Xanthine-guanine phosphoribosyltransferase (154 aa).

5-phospho-alpha-D-ribose 1-diphosphate-binding positions include 37–38, Arg-69, and 88–96; these read RG and EDLVDSGDT. Residue Arg-69 coordinates GMP. Asp-89 serves as a coordination point for Mg(2+). Positions 92 and 135 each coordinate guanine. Residues Asp-92 and Ile-135 each coordinate xanthine. Residues 92–96 and 134–135 each bind GMP; these read DSGDT and WI.

This sequence belongs to the purine/pyrimidine phosphoribosyltransferase family. XGPT subfamily. Homotetramer. Requires Mg(2+) as cofactor.

The protein resides in the cell inner membrane. The catalysed reaction is GMP + diphosphate = guanine + 5-phospho-alpha-D-ribose 1-diphosphate. The enzyme catalyses XMP + diphosphate = xanthine + 5-phospho-alpha-D-ribose 1-diphosphate. It catalyses the reaction IMP + diphosphate = hypoxanthine + 5-phospho-alpha-D-ribose 1-diphosphate. It functions in the pathway purine metabolism; GMP biosynthesis via salvage pathway; GMP from guanine: step 1/1. Its pathway is purine metabolism; XMP biosynthesis via salvage pathway; XMP from xanthine: step 1/1. Purine salvage pathway enzyme that catalyzes the transfer of the ribosyl-5-phosphate group from 5-phospho-alpha-D-ribose 1-diphosphate (PRPP) to the N9 position of the 6-oxopurines guanine and xanthine to form the corresponding ribonucleotides GMP (guanosine 5'-monophosphate) and XMP (xanthosine 5'-monophosphate), with the release of PPi. To a lesser extent, also acts on hypoxanthine. This Vibrio vulnificus (strain CMCP6) protein is Xanthine-guanine phosphoribosyltransferase.